The primary structure comprises 52 residues: uncharacterized protein (52 aa).

This is an uncharacterized protein from Dictyostelium discoideum (Social amoeba).